A 472-amino-acid chain; its full sequence is tRNA-2-methylthio-N(6)-dimethylallyladenosine synthase (472 aa).

The disordered stretch occupies residues 1–24; that stretch reads MTGTPDVFPPATPGGAPLVALPAG. One can recognise an MTTase N-terminal domain in the interval 33-150; it reads GKLYIKTHGC…LPELIRARRE (118 aa). Residues Cys42, Cys79, Cys113, Cys187, Cys191, and Cys194 each coordinate [4Fe-4S] cluster. Residues 173–407 form the Radical SAM core domain; the sequence is RAEGASAFVS…RINAHAAGIS (235 aa). A TRAM domain is found at 408–471; it reads EKMVGTVQTV…TNSLRARVVA (64 aa).

This sequence belongs to the methylthiotransferase family. MiaB subfamily. As to quaternary structure, monomer. [4Fe-4S] cluster serves as cofactor.

Its subcellular location is the cytoplasm. The enzyme catalyses N(6)-dimethylallyladenosine(37) in tRNA + (sulfur carrier)-SH + AH2 + 2 S-adenosyl-L-methionine = 2-methylsulfanyl-N(6)-dimethylallyladenosine(37) in tRNA + (sulfur carrier)-H + 5'-deoxyadenosine + L-methionine + A + S-adenosyl-L-homocysteine + 2 H(+). Its function is as follows. Catalyzes the methylthiolation of N6-(dimethylallyl)adenosine (i(6)A), leading to the formation of 2-methylthio-N6-(dimethylallyl)adenosine (ms(2)i(6)A) at position 37 in tRNAs that read codons beginning with uridine. This chain is tRNA-2-methylthio-N(6)-dimethylallyladenosine synthase, found in Stenotrophomonas maltophilia (strain K279a).